The following is a 316-amino-acid chain: Arabinooligosaccharides transport system permease protein AraP (316 aa).

The next 7 helical transmembrane spans lie at 32–52 (VVPYVLISPFILSFIVLSFYP), 94–114 (TYMILTVVILVSIPMLFAVLL), 128–148 (ALFLPALTSVIVAGMVFRLMF), 178–198 (MFLMVVLASWRWMGINILYFL), 224–244 (FYVTLPFLKPVTIFVTTISVI), 254–274 (FVFWEAGSPGNIGLTIVGYLY), and 283–303 (MGFGAAIGVVLMLIIFVISIT). The ABC transmembrane type-1 domain occupies 89–304 (LQNTTTYMIL…LIIFVISITQ (216 aa)).

Belongs to the binding-protein-dependent transport system permease family. MalFG subfamily. The complex is composed of two ATP-binding proteins (MsmX), two transmembrane proteins (AraP and AraQ) and a solute-binding protein (AraN).

It localises to the cell membrane. In terms of biological role, part of the ABC transporter complex AraNPQ involved in the uptake of arabinooligosaccharides. Responsible for the translocation of the substrate across the membrane. The protein is Arabinooligosaccharides transport system permease protein AraP (araP) of Halalkalibacterium halodurans (strain ATCC BAA-125 / DSM 18197 / FERM 7344 / JCM 9153 / C-125) (Bacillus halodurans).